A 254-amino-acid chain; its full sequence is Triosephosphate isomerase (254 aa).

N10–K12 lines the substrate pocket. Catalysis depends on H96, which acts as the Electrophile. The Proton acceptor role is filled by E168. Substrate-binding positions include G174, S214, and G235–G236.

This sequence belongs to the triosephosphate isomerase family. Homodimer.

It is found in the cytoplasm. It carries out the reaction D-glyceraldehyde 3-phosphate = dihydroxyacetone phosphate. The protein operates within carbohydrate biosynthesis; gluconeogenesis. It functions in the pathway carbohydrate degradation; glycolysis; D-glyceraldehyde 3-phosphate from glycerone phosphate: step 1/1. Its function is as follows. Involved in the gluconeogenesis. Catalyzes stereospecifically the conversion of dihydroxyacetone phosphate (DHAP) to D-glyceraldehyde-3-phosphate (G3P). This chain is Triosephosphate isomerase, found in Rhodopirellula baltica (strain DSM 10527 / NCIMB 13988 / SH1).